We begin with the raw amino-acid sequence, 292 residues long: F-box only protein 16 (292 aa).

The 47-residue stretch at 86-132 folds into the F-box domain; it reads LDFTTKLPRVLSLYIFSFLDPRSLCRCAQVCWHWKNLAELDQLWMLK. Disordered stretches follow at residues 188–224 and 238–292; these read SPEEKQSPLSAFRSSSSLRKKNNSGEKALPPWRSSDK and RDPM…PLCP. Over residues 194–204 the composition is skewed to low complexity; that stretch reads SPLSAFRSSSS. Basic and acidic residues predominate over residues 260–273; that stretch reads RQSHDKKNKLQDRT.

In terms of assembly, part of a SCF (SKP1-cullin-F-box) protein ligase complex. As to expression, expressed in heart, spleen and colon.

Functionally, probably recognizes and binds to some phosphorylated proteins and promotes their ubiquitination and degradation. This chain is F-box only protein 16 (FBXO16), found in Homo sapiens (Human).